Consider the following 418-residue polypeptide: L-rhamnose isomerase (418 aa).

The Mn(2+) site is built by His262, Asp294, and Asp296.

Belongs to the rhamnose isomerase family. In terms of assembly, homotetramer. The cofactor is Mn(2+).

The protein resides in the cytoplasm. The enzyme catalyses L-rhamnopyranose = L-rhamnulose. It participates in carbohydrate degradation; L-rhamnose degradation; glycerone phosphate from L-rhamnose: step 1/3. In terms of biological role, catalyzes the interconversion of L-rhamnose and L-rhamnulose. The sequence is that of L-rhamnose isomerase from Yersinia pestis bv. Antiqua (strain Antiqua).